The chain runs to 207 residues: Large ribosomal subunit protein uL4 (207 aa).

Residues 44–78 (MRQGTHKTKNRAEVSGGGRKPWRQKGTGRARQGSI) are disordered.

The protein belongs to the universal ribosomal protein uL4 family. In terms of assembly, part of the 50S ribosomal subunit.

Functionally, one of the primary rRNA binding proteins, this protein initially binds near the 5'-end of the 23S rRNA. It is important during the early stages of 50S assembly. It makes multiple contacts with different domains of the 23S rRNA in the assembled 50S subunit and ribosome. In terms of biological role, forms part of the polypeptide exit tunnel. This Geobacillus kaustophilus (strain HTA426) protein is Large ribosomal subunit protein uL4.